A 260-amino-acid polypeptide reads, in one-letter code: Carbonic anhydrase 2 (260 aa).

N-acetylserine is present on serine 2. A Phosphoserine modification is found at serine 2. The 257-residue stretch at 3 to 259 (HHWGYGKHNG…LKNRQIKASF (257 aa)) folds into the Alpha-carbonic anhydrase domain. Histidine 64 functions as the Proton donor/acceptor in the catalytic mechanism. Zn(2+) contacts are provided by histidine 94, histidine 96, and histidine 119. Serine 165 and serine 172 each carry phosphoserine. Residue 198 to 199 (TT) coordinates substrate.

Belongs to the alpha-carbonic anhydrase family. In terms of assembly, interacts with SLC4A4. Interaction with SLC4A7 regulates SLC4A7 transporter activity. Interacts with SLC26A6 isoform 4 (via C-terminus cytoplasmic domain). The cofactor is Zn(2+). Co(2+) serves as cofactor.

It is found in the cytoplasm. The protein resides in the cell membrane. The enzyme catalyses hydrogencarbonate + H(+) = CO2 + H2O. It carries out the reaction urea = cyanamide + H2O. With respect to regulation, activated by X-ray, histamine, L-adrenaline, L- and D-phenylalanine, L- and D-histidine, L-His-OMe and beta-Ala-His (carnosine). Competitively inhibited by saccharin, thioxolone, coumarins, 667-coumate, celecoxib (Celebrex), valdecoxib (Bextra), SC-125, SC-560, diclofenac, acetate, azide, bromide, sulfonamide derivatives such as acetazolamide (AZA), methazolamide (MZA), ethoxzolamide (EZA), dichlorophenamide (DCP), brinzolamide, dansylamide, thiabendazole-5-sulfonamide, trifluoromethane sulfonamide and N-hydroxysulfamide, fructose-based sugar sulfamate RWJ-37497, and Foscarnet (phosphonoformate trisodium salt). Repressed strongly by hydrogen sulfide(HS) and weakly by nitrate (NO(3)). Esterase activity weakly reduced by cyanamide. N-hydroxyurea interferes with zinc binding and inhibit activity. Functionally, catalyzes the reversible hydration of carbon dioxide. Can also hydrate cyanamide to urea. Stimulates the chloride-bicarbonate exchange activity of SLC26A6. Essential for bone resorption and osteoclast differentiation. Involved in the regulation of fluid secretion into the anterior chamber of the eye. Contributes to intracellular pH regulation in the duodenal upper villous epithelium during proton-coupled peptide absorption. This is Carbonic anhydrase 2 (CA2) from Homo sapiens (Human).